A 243-amino-acid chain; its full sequence is Geranylgeranylglyceryl phosphate synthase (243 aa).

Mg(2+)-binding residues include D29 and S58. Sn-glycerol 1-phosphate-binding positions include 178 to 184 (YLEAGSG), 209 to 210 (GG), and 231 to 232 (GT).

Belongs to the GGGP/HepGP synthase family. Group II subfamily. In terms of assembly, homodimer. Mg(2+) serves as cofactor.

It carries out the reaction sn-glycerol 1-phosphate + (2E,6E,10E)-geranylgeranyl diphosphate = sn-3-O-(geranylgeranyl)glycerol 1-phosphate + diphosphate. Its function is as follows. Prenyltransferase that catalyzes the transfer of the geranylgeranyl moiety of geranylgeranyl diphosphate (GGPP) to the C3 hydroxyl of sn-glycerol-1-phosphate (G1P). The chain is Geranylgeranylglyceryl phosphate synthase from Flavobacterium johnsoniae (strain ATCC 17061 / DSM 2064 / JCM 8514 / BCRC 14874 / CCUG 350202 / NBRC 14942 / NCIMB 11054 / UW101) (Cytophaga johnsonae).